Here is a 260-residue protein sequence, read N- to C-terminus: Adenosylcobinamide-GDP ribazoletransferase (260 aa).

The next 8 membrane-spanning stretches (helical) occupy residues 3–23 (APLWLRDLAGAWIFYSVLPAW), 36–56 (FAPWIGLVLGGLQSFLWLVLI), 60–80 (WPTSAVALLVIGLGAWLSGGL), 108–128 (VGASGVQALLVVVLLQIAALL), 133–153 (LAPLALLIAAFWGRCAPLWAM), 180–200 (ALPAFLVLLLALTVVPLLMIV), 206–226 (MVLMAGIGVGVLPAFLVPELL), and 239–259 (GASVVLVETITLLLLAVLLTA).

This sequence belongs to the CobS family. Requires Mg(2+) as cofactor.

It localises to the cell inner membrane. The enzyme catalyses alpha-ribazole + adenosylcob(III)inamide-GDP = adenosylcob(III)alamin + GMP + H(+). The catalysed reaction is alpha-ribazole 5'-phosphate + adenosylcob(III)inamide-GDP = adenosylcob(III)alamin 5'-phosphate + GMP + H(+). The protein operates within cofactor biosynthesis; adenosylcobalamin biosynthesis; adenosylcobalamin from cob(II)yrinate a,c-diamide: step 7/7. Its function is as follows. Joins adenosylcobinamide-GDP and alpha-ribazole to generate adenosylcobalamin (Ado-cobalamin). Also synthesizes adenosylcobalamin 5'-phosphate from adenosylcobinamide-GDP and alpha-ribazole 5'-phosphate. This Prochlorococcus marinus (strain MIT 9303) protein is Adenosylcobinamide-GDP ribazoletransferase.